The sequence spans 216 residues: MOB kinase activator 3B (216 aa).

Residues Cys-82, Cys-87, His-164, and His-169 each coordinate Zn(2+).

Modulates LATS1 expression in the Hippo signaling pathway which plays a pivotal role in organ size control and tumor suppression by restricting proliferation and promoting apoptosis. The sequence is that of MOB kinase activator 3B (Mob3b) from Mus musculus (Mouse).